The sequence spans 131 residues: Holo-[acyl-carrier-protein] synthase (131 aa).

Residues aspartate 8 and glutamate 59 each coordinate Mg(2+).

The protein belongs to the P-Pant transferase superfamily. AcpS family. Requires Mg(2+) as cofactor.

It is found in the cytoplasm. The catalysed reaction is apo-[ACP] + CoA = holo-[ACP] + adenosine 3',5'-bisphosphate + H(+). Its function is as follows. Transfers the 4'-phosphopantetheine moiety from coenzyme A to a Ser of acyl-carrier-protein. In Rickettsia rickettsii (strain Sheila Smith), this protein is Holo-[acyl-carrier-protein] synthase.